Reading from the N-terminus, the 584-residue chain is Alkaline nuclease (584 aa).

The tract at residues 409–429 (GGGADHHLRGSPGDSPPPIPF) is disordered.

Belongs to the herpesviridae alkaline nuclease family. In terms of assembly, interacts with major DNA-binding protein; this interaction increases the nuclease processivity of the alkaline exonuclease.

The protein localises to the host nucleus. Its subcellular location is the host cytoplasm. Its function is as follows. Plays a role in processing non linear or branched viral DNA intermediates in order to promote the production of mature packaged unit-length linear progeny viral DNA molecules. Exhibits endonuclease and exonuclease activities and accepts both double-stranded and single-stranded DNA as substrate. Exonuclease digestion of DNA is in the 5'-&gt; 3' direction and the products are 5'-monophosphate nucleosides. Additionally, forms a recombinase with the major DNA-binding protein, which displays strand exchange activity. This chain is Alkaline nuclease (UL98), found in Homo sapiens (Human).